The chain runs to 436 residues: UPF0597 protein YhaM (436 aa).

Belongs to the UPF0597 family.

The sequence is that of UPF0597 protein YhaM from Escherichia coli O6:H1 (strain CFT073 / ATCC 700928 / UPEC).